We begin with the raw amino-acid sequence, 355 residues long: Syntaxin-5 (355 aa).

At 1–333 (MIPRKRYGSK…KYFQSVTSNR (333 aa)) the chain is on the cytoplasmic side. The short motif at 245 to 247 (IDM) is the IxM motif; signal for cargo packaging into COPII-coated vesicles element. Residues 263–325 (DSYIQSRADT…EAAHSEILKY (63 aa)) form the t-SNARE coiled-coil homology domain. The stretch at 287-318 (FQQLAHMVKEQEETIQRIDENVLGAQLDVEAA) forms a coiled coil. The helical; Anchor for type IV membrane protein transmembrane segment at 334 to 354 (WLMVKIFLILIVFFIIFVVFL) threads the bilayer. A355 is a topological domain (vesicular).

Belongs to the syntaxin family. In terms of assembly, part of a ternary complex containing STX5A, NSFL1C and VCP. Part of a unique SNARE complex composed of the Golgi SNAREs GOSR1, GOSR2 and YKT6. This complex also includes VTI1A. Component of a SNARE complex consisting of STX5, YKT6, GOSR1 and BET1L. Interacts with BET1L. Interacts with BET1. Interacts with COG4. Interacts with GM130/GOLGA2. Interacts (via IxM motif) with SEC24C and SEC24D; mediates STX5 packaging into COPII-coated vesicles. Interacts with VLDLR; this interaction mediates VLDLR translocation from the endoplasmic reticulum to the plasma membrane. As to expression, expressed in the brain, heart, spleen, lung, liver, kidney and testis.

Its subcellular location is the endoplasmic reticulum-Golgi intermediate compartment membrane. It is found in the golgi apparatus membrane. Its function is as follows. Mediates endoplasmic reticulum to Golgi transport. Together with p115/USO1 and GM130/GOLGA2, involved in vesicle tethering and fusion at the cis-Golgi membrane to maintain the stacked and inter-connected structure of the Golgi apparatus. Required for Golgi to endoplasmic reticulum retrogade transport, and for intra-Golgi transport. This chain is Syntaxin-5 (Stx5), found in Rattus norvegicus (Rat).